A 710-amino-acid chain; its full sequence is Tubulin polyglutamylase TTLL11 (710 aa).

Residues 41-135 are disordered; that stretch reads VRVDAGAAGE…QRPVTVDSSK (95 aa). The span at 51-60 shows a compositional bias: basic and acidic residues; sequence PECKAGEEQP. A compositionally biased stretch (low complexity) spans 64–82; sequence APAPAQPSAAEEGNTQVLQ. Residues 83–93 are compositionally biased toward pro residues; that stretch reads RPPPTLPPSKP. A compositionally biased stretch (polar residues) spans 123–135; the sequence is NGSQRPVTVDSSK. The 353-residue stretch at 128-480 folds into the TTL domain; sequence PVTVDSSKAR…EVKVAVIRDT (353 aa). Residues K249, 255–256, 282–285, and 295–297 each bind ATP; these read QG, QEYI, and KFD. Q255 contributes to the a protein binding site. R321 contributes to the L-glutamate binding site. ATP is bound at residue 343–344; sequence TN. Residues Y345, S346, and K365 each contribute to the L-glutamate site. Mg(2+) is bound by residues D428, E441, and N443. The tract at residues 467–538 is c-MTBD region; the sequence is LVDEEVKVAV…SICLKQVFPK (72 aa). Position 473 (K473) interacts with L-glutamate. The segment at 665 to 710 is disordered; the sequence is GVPSGGRPPHRGPPQEPSPSAQPAGDNPPPRTSCANKLSHPRHTLS.

Belongs to the tubulin--tyrosine ligase family. Requires Mg(2+) as cofactor.

Its subcellular location is the cytoplasm. It is found in the cytoskeleton. The protein resides in the cilium basal body. The enzyme catalyses L-glutamyl-[protein] + L-glutamate + ATP = gamma-L-glutamyl-L-glutamyl-[protein] + ADP + phosphate + H(+). The catalysed reaction is (L-glutamyl)(n)-gamma-L-glutamyl-L-glutamyl-[protein] + L-glutamate + ATP = (L-glutamyl)(n+1)-gamma-L-glutamyl-L-glutamyl-[protein] + ADP + phosphate + H(+). Functionally, polyglutamylase which modifies tubulin, generating polyglutamate side chains of variable lengths on the gamma-carboxyl group of specific glutamate residues within the C-terminal tail of tubulin. Preferentially mediates ATP-dependent polyglutamate long side-chain elongation over the initiation step of the polyglutamylation reaction. Preferentially modifies the alpha-tubulin tail over a beta-tail. Required for CCSAP localization to both spindle and cilia microtubules. Promotes tubulin polyglutamylation which stimulates spastin/SPAST-mediated microtubule severing, thereby regulating microtubule functions. This chain is Tubulin polyglutamylase TTLL11, found in Homo sapiens (Human).